The chain runs to 295 residues: NAD kinase (295 aa).

The active-site Proton acceptor is the Asp74. Residues 74–75 (DG), 148–149 (NE), Arg176, Asp178, and 189–194 (TAYAMS) contribute to the NAD(+) site.

The protein belongs to the NAD kinase family. A divalent metal cation is required as a cofactor.

The protein localises to the cytoplasm. It carries out the reaction NAD(+) + ATP = ADP + NADP(+) + H(+). Functionally, involved in the regulation of the intracellular balance of NAD and NADP, and is a key enzyme in the biosynthesis of NADP. Catalyzes specifically the phosphorylation on 2'-hydroxyl of the adenosine moiety of NAD to yield NADP. The polypeptide is NAD kinase (Acidithiobacillus ferrooxidans (strain ATCC 23270 / DSM 14882 / CIP 104768 / NCIMB 8455) (Ferrobacillus ferrooxidans (strain ATCC 23270))).